A 422-amino-acid chain; its full sequence is Serine--tRNA ligase (422 aa).

229-231 lines the L-serine pocket; the sequence is TAE. 260 to 262 contributes to the ATP binding site; sequence RKE. Glu-283 serves as a coordination point for L-serine. Position 347-350 (347-350) interacts with ATP; the sequence is EISS. Ser-383 contacts L-serine.

The protein belongs to the class-II aminoacyl-tRNA synthetase family. Type-1 seryl-tRNA synthetase subfamily. In terms of assembly, homodimer. The tRNA molecule binds across the dimer.

It is found in the cytoplasm. It carries out the reaction tRNA(Ser) + L-serine + ATP = L-seryl-tRNA(Ser) + AMP + diphosphate + H(+). The catalysed reaction is tRNA(Sec) + L-serine + ATP = L-seryl-tRNA(Sec) + AMP + diphosphate + H(+). It participates in aminoacyl-tRNA biosynthesis; selenocysteinyl-tRNA(Sec) biosynthesis; L-seryl-tRNA(Sec) from L-serine and tRNA(Sec): step 1/1. Functionally, catalyzes the attachment of serine to tRNA(Ser). Is also able to aminoacylate tRNA(Sec) with serine, to form the misacylated tRNA L-seryl-tRNA(Sec), which will be further converted into selenocysteinyl-tRNA(Sec). This chain is Serine--tRNA ligase, found in Geobacter sp. (strain M21).